We begin with the raw amino-acid sequence, 82 residues long: Acyl carrier protein (82 aa).

Residues 3-78 enclose the Carrier domain; the sequence is QEIFERVKKV…KAVEHISEKV (76 aa). Ser38 is subject to O-(pantetheine 4'-phosphoryl)serine.

Belongs to the acyl carrier protein (ACP) family. 4'-phosphopantetheine is transferred from CoA to a specific serine of apo-ACP by AcpS. This modification is essential for activity because fatty acids are bound in thioester linkage to the sulfhydryl of the prosthetic group.

The protein resides in the cytoplasm. The protein operates within lipid metabolism; fatty acid biosynthesis. Its function is as follows. Carrier of the growing fatty acid chain in fatty acid biosynthesis. This chain is Acyl carrier protein, found in Gloeothece citriformis (strain PCC 7424) (Cyanothece sp. (strain PCC 7424)).